A 278-amino-acid polypeptide reads, in one-letter code: Tryptophan synthase alpha chain (278 aa).

Active-site proton acceptor residues include glutamate 50 and aspartate 61.

Belongs to the TrpA family. In terms of assembly, tetramer of two alpha and two beta chains.

The enzyme catalyses (1S,2R)-1-C-(indol-3-yl)glycerol 3-phosphate + L-serine = D-glyceraldehyde 3-phosphate + L-tryptophan + H2O. Its pathway is amino-acid biosynthesis; L-tryptophan biosynthesis; L-tryptophan from chorismate: step 5/5. In terms of biological role, the alpha subunit is responsible for the aldol cleavage of indoleglycerol phosphate to indole and glyceraldehyde 3-phosphate. The protein is Tryptophan synthase alpha chain of Rhodopseudomonas palustris (strain TIE-1).